Consider the following 113-residue polypeptide: uncharacterized protein (113 aa).

The Cupin type-2 domain occupies D41 to R88.

The protein belongs to the SchB/CurC family.

This is an uncharacterized protein from Bacillus subtilis (strain 168).